Here is a 293-residue protein sequence, read N- to C-terminus: MSARTLDGKATAAAIKAELRERVSALRERGVVPGLGTILVGDDPGSQWYVAGKHRDCAEVGIASLRRDLPAEISQAELEAVVEQLNADPGCTGFIVQLPLPSHLDTDAVLELVDPAKDADGLHPTNLGRLVLNVNRPITTPLPCTPRGVIELMLRHGIDLAGKDVVVVGRGVTVGRSIGALLTRREVNATVTLTHTGTKSLDEHLRSADVIVAAAGVPGLVSAENVKPGAIVLDVGVSRVEDPETGKSRVAGDVAADVAGVASWISPNPGGVGPMTRALLLQNVVESAERALR.

Residues 169–171 (GRG), threonine 196, and valine 237 each bind NADP(+).

It belongs to the tetrahydrofolate dehydrogenase/cyclohydrolase family. As to quaternary structure, homodimer.

The catalysed reaction is (6R)-5,10-methylene-5,6,7,8-tetrahydrofolate + NADP(+) = (6R)-5,10-methenyltetrahydrofolate + NADPH. The enzyme catalyses (6R)-5,10-methenyltetrahydrofolate + H2O = (6R)-10-formyltetrahydrofolate + H(+). Its pathway is one-carbon metabolism; tetrahydrofolate interconversion. Its function is as follows. Catalyzes the oxidation of 5,10-methylenetetrahydrofolate to 5,10-methenyltetrahydrofolate and then the hydrolysis of 5,10-methenyltetrahydrofolate to 10-formyltetrahydrofolate. The chain is Bifunctional protein FolD from Leifsonia xyli subsp. xyli (strain CTCB07).